Consider the following 421-residue polypeptide: Forkhead box protein J1 (421 aa).

Disordered stretches follow at residues 1 to 32 (MAES…LDDS) and 79 to 110 (PACL…PPPD). Residues 11 to 21 (AGPGEEAGPEG) show a composition bias toward gly residues. Polar residues predominate over residues 90–99 (KPTSSCTSRS). The fork-head DNA-binding region spans 120–210 (VKPPYSYATL…YAERLLSGAF (91 aa)). Residues 256–277 (EATGEGGWGTGEGRLGHKRKQP) form a disordered region. The segment covering 259–268 (GEGGWGTGEG) has biased composition (gly residues).

This sequence belongs to the FOXJ1 family. As to expression, pulmonary epithelium, testis and oviduct.

It is found in the nucleus. Functionally, transcription factor specifically required for the formation of motile cilia. Acts by activating transcription of genes that mediate assembly of motile cilia, such as CFAP157. Binds the DNA consensus sequences 5'-HWDTGTTTGTTTA-3' or 5'-KTTTGTTGTTKTW-3' (where H is not G, W is A or T, D is not C, and K is G or T). Activates the transcription of a variety of ciliary proteins in the developing brain and lung. This chain is Forkhead box protein J1 (Foxj1), found in Rattus norvegicus (Rat).